Reading from the N-terminus, the 262-residue chain is VPS74-like protein DDB_G0288371 (262 aa).

This sequence belongs to the GOLPH3/VPS74 family.

It is found in the golgi apparatus. Its subcellular location is the golgi stack membrane. In terms of biological role, phosphatidylinositol-4-phosphate-binding protein that links Golgi membranes to the cytoskeleton and may participate in the tensile force required for vesicle budding from the Golgi. Thereby, may play a role in Golgi membrane trafficking. May also bind to the coatomer to regulate Golgi membrane trafficking. May play a role in anterograde transport from the Golgi to the plasma membrane and regulate secretion. May be involved in vacuolar protein sorting. This chain is VPS74-like protein DDB_G0288371, found in Dictyostelium discoideum (Social amoeba).